The chain runs to 132 residues: Large ribosomal subunit protein bL21 (132 aa).

The interval 111 to 132 (AAEKPARKPRAKKTNEVTTDGA) is disordered.

It belongs to the bacterial ribosomal protein bL21 family. As to quaternary structure, part of the 50S ribosomal subunit. Contacts protein L20.

Functionally, this protein binds to 23S rRNA in the presence of protein L20. The sequence is that of Large ribosomal subunit protein bL21 from Dehalococcoides mccartyi (strain CBDB1).